A 334-amino-acid polypeptide reads, in one-letter code: Tryptophan--tRNA ligase (334 aa).

Residues glutamine 12 to serine 14 and glycine 20 to asparagine 21 each bind ATP. The short motif at proline 13–asparagine 21 is the 'HIGH' region element. Aspartate 136 is a binding site for L-tryptophan. ATP is bound by residues glycine 148–aspartate 150, isoleucine 187, and lysine 196–serine 200. The short motif at lysine 196 to serine 200 is the 'KMSKS' region element.

Belongs to the class-I aminoacyl-tRNA synthetase family. Homodimer.

The protein localises to the cytoplasm. The enzyme catalyses tRNA(Trp) + L-tryptophan + ATP = L-tryptophyl-tRNA(Trp) + AMP + diphosphate + H(+). In terms of biological role, catalyzes the attachment of tryptophan to tRNA(Trp). The polypeptide is Tryptophan--tRNA ligase (Wigglesworthia glossinidia brevipalpis).